Here is a 354-residue protein sequence, read N- to C-terminus: Nicotinate-nucleotide--dimethylbenzimidazole phosphoribosyltransferase (354 aa).

The active-site Proton acceptor is E317.

This sequence belongs to the CobT family. In terms of assembly, homodimer.

It catalyses the reaction 5,6-dimethylbenzimidazole + nicotinate beta-D-ribonucleotide = alpha-ribazole 5'-phosphate + nicotinate + H(+). It functions in the pathway nucleoside biosynthesis; alpha-ribazole biosynthesis; alpha-ribazole from 5,6-dimethylbenzimidazole: step 1/2. Functionally, catalyzes the synthesis of alpha-ribazole-5'-phosphate from nicotinate mononucleotide (NAMN) and 5,6-dimethylbenzimidazole (DMB). The sequence is that of Nicotinate-nucleotide--dimethylbenzimidazole phosphoribosyltransferase from Salmonella arizonae (strain ATCC BAA-731 / CDC346-86 / RSK2980).